An 80-amino-acid chain; its full sequence is Gamma-conotoxin PnVIIA (80 aa).

A signal peptide spans 1–19 (MEKLTILLLVAAVLMSTQA). A propeptide spanning residues 20–43 (QNQEQRQQAKINFLSKRKPSAERW) is cleaved from the precursor. 3 cysteine pairs are disulfide-bonded: Cys47–Cys61, Cys54–Cys65, and Cys60–Cys70. The residue at position 59 (Glu59) is a 4-carboxyglutamate. Glu71 is subject to 4-carboxyglutamate. Position 76 is a 4-hydroxyproline (Pro76). A propeptide spanning residues 78-80 (FGA) is cleaved from the precursor.

In terms of tissue distribution, expressed by the venom duct.

Its subcellular location is the secreted. In terms of biological role, gamma-conotoxins may act on voltage-gated non-specific cation pacemaker channels (HCN). Triggers depolarization and firing of action potential bursts in the caudodorsal neurons of lymnaea. This effect is due to activation or enhancement of a slow inward cation current that may underlie endogenous bursting activity of these neurons. This chain is Gamma-conotoxin PnVIIA, found in Conus pennaceus (Feathered cone).